The following is a 216-amino-acid chain: Thiamine-phosphate synthase (216 aa).

4-amino-2-methyl-5-(diphosphooxymethyl)pyrimidine contacts are provided by residues 37-41 (QVRSK) and Asp68. Mg(2+) contacts are provided by Asp69 and Asp93. Residue Thr112 coordinates 4-amino-2-methyl-5-(diphosphooxymethyl)pyrimidine. 140–142 (TPT) provides a ligand contact to 2-[(2R,5Z)-2-carboxy-4-methylthiazol-5(2H)-ylidene]ethyl phosphate. Lys143 is a 4-amino-2-methyl-5-(diphosphooxymethyl)pyrimidine binding site.

Belongs to the thiamine-phosphate synthase family. Requires Mg(2+) as cofactor.

It catalyses the reaction 2-[(2R,5Z)-2-carboxy-4-methylthiazol-5(2H)-ylidene]ethyl phosphate + 4-amino-2-methyl-5-(diphosphooxymethyl)pyrimidine + 2 H(+) = thiamine phosphate + CO2 + diphosphate. The catalysed reaction is 2-(2-carboxy-4-methylthiazol-5-yl)ethyl phosphate + 4-amino-2-methyl-5-(diphosphooxymethyl)pyrimidine + 2 H(+) = thiamine phosphate + CO2 + diphosphate. It carries out the reaction 4-methyl-5-(2-phosphooxyethyl)-thiazole + 4-amino-2-methyl-5-(diphosphooxymethyl)pyrimidine + H(+) = thiamine phosphate + diphosphate. The protein operates within cofactor biosynthesis; thiamine diphosphate biosynthesis; thiamine phosphate from 4-amino-2-methyl-5-diphosphomethylpyrimidine and 4-methyl-5-(2-phosphoethyl)-thiazole: step 1/1. Functionally, condenses 4-methyl-5-(beta-hydroxyethyl)thiazole monophosphate (THZ-P) and 2-methyl-4-amino-5-hydroxymethyl pyrimidine pyrophosphate (HMP-PP) to form thiamine monophosphate (TMP). This is Thiamine-phosphate synthase from Corynebacterium efficiens (strain DSM 44549 / YS-314 / AJ 12310 / JCM 11189 / NBRC 100395).